Here is a 588-residue protein sequence, read N- to C-terminus: Aspartate--tRNA ligase (588 aa).

Glu177 contributes to the L-aspartate binding site. Residues 201–204 (QLFK) form an aspartate region. Residue Arg223 coordinates L-aspartate. ATP contacts are provided by residues 223 to 225 (RDE) and Gln232. Residue His451 participates in L-aspartate binding. Glu485 is an ATP binding site. Arg492 contacts L-aspartate. 537–540 (GLDR) provides a ligand contact to ATP.

The protein belongs to the class-II aminoacyl-tRNA synthetase family. Type 1 subfamily. As to quaternary structure, homodimer.

It localises to the cytoplasm. The catalysed reaction is tRNA(Asp) + L-aspartate + ATP = L-aspartyl-tRNA(Asp) + AMP + diphosphate. Its function is as follows. Catalyzes the attachment of L-aspartate to tRNA(Asp) in a two-step reaction: L-aspartate is first activated by ATP to form Asp-AMP and then transferred to the acceptor end of tRNA(Asp). This is Aspartate--tRNA ligase from Staphylococcus haemolyticus (strain JCSC1435).